The primary structure comprises 250 residues: Protein UL24 homolog (250 aa).

The tract at residues 205–250 (TKSTKRARDKPTQVSRVPAQRSPVQKARGRKQAESHKKGASKGRAG) is disordered.

Belongs to the herpesviridae UL24 family.

The protein is Protein UL24 homolog (20) of Alcelaphine herpesvirus 1 (strain C500) (AlHV-1).